The sequence spans 1325 residues: SCAN domain-containing protein 3 (1325 aa).

The region spanning 52 to 134 is the SCAN box domain; the sequence is RQRFRQFCYQ…TLLEDLEREL (83 aa). A coiled-coil region spans residues 246-275; it reads KAKYCQLIKEVKEAKAKAKKESVDYRRLAR. In terms of domain architecture, Integrase catalytic spans 366–526; it reads KSIKEVSSRC…TPCESAFSSE (161 aa). Positions 542-568 form a coiled coil; the sequence is ASLHTENELDQADKELENTLRAQYEEN.

Weakly expressed in the lung (at protein level).

Its subcellular location is the nucleus. This Homo sapiens (Human) protein is SCAN domain-containing protein 3.